A 942-amino-acid polypeptide reads, in one-letter code: MAGLARGDSRGRPPELPGDLSSQEEEEEEGDSDAGASSLGSYSSASSDTDVEPEWLDSVQKNGELFYLELSEDEEESLLPETQTANHVNHVRFSDKEVIIEEDDSRERKKSEPKLRRFTKILKSKSLLPRRHHKKSSSNNGPVSILKHQSSQKTGVTVQQRYKDVTVYINPRKLTAIKAREQVKLLEVLVGIIHQTKRSWKRSAKQADGERLVVHGLLPGGSAMKSGQVLVGDVLVAVNDVDVTSENIERVLSCIPGPMQVKLTFENAYAVKRETAQPQKKKAQSSTQDLVKLLCGSEADAVQHSTLSIPHISMYLTLQLQSEAAREEQEILYHYPVSEASQKLKSVRGIFLTLCDMLESVTGTQVTSSSLHLNGKQIHVAYLKESDKLLLIGLPAEEVPLPQLRNMIEDVAQTLKFMYGSLDSAFCQVENAPRLDHFFSLFFERALRPGKLHLSGSPSAQQYAAASAVLLDNLPGVRWLVLPQELKVELDTALSDLEAADFEELSEDYYDMRRLYTILGSSLFYKGYMVCSHLPKDDVIEIAAYCRQHCLLPLAAKQRIGQLIIWREVFPRHHLQPPSDSDPEAFQEPEGRYFLLVVGLRHYLLCVLLEAGGCASKATGNPGPDCIYVDQVRATLHQLEGVDSRIEEQLATSPGPCLSCADWFLAAPREKADSLTTSPILSRLQGPSKTAASPTCRRTFFSDYSFKARKPSPSRIGGGREPTEGEESAGLSPHATPDAVRKQRESEGSDDNVALLKLARKKSTLPNPFHLGTSKKELSEKELEVYDIMKLTSGPENTLFHYVALETVQGIFITPTHEEVAQLGGSVHSQLIKNFHQCCLSIRAFFQQTLKEEKKKALSDGEHSEPTNSVSSLSPVKEHGVLFECSPENWTDQKKTPPVMSYWVVGRLFLNPKPQELYVCFHDSVSEIAIEMAFKLFFGLTL.

Disordered regions lie at residues 1 to 56 (MAGL…PEWL) and 128 to 156 (LPRR…KTGV). Over residues 22-32 (SQEEEEEEGDS) the composition is skewed to acidic residues. The segment covering 33-48 (DAGASSLGSYSSASSD) has biased composition (low complexity). Residues 137-156 (SSNNGPVSILKHQSSQKTGV) are compositionally biased toward polar residues. A PDZ domain is found at 185–267 (LLEVLVGIIH…PMQVKLTFEN (83 aa)). Phosphoserine occurs at positions 674 and 678. The disordered stretch occupies residues 707-751 (KARKPSPSRIGGGREPTEGEESAGLSPHATPDAVRKQRESEGSDD).

The protein belongs to the inturned family. Component of the CPLANE (ciliogenesis and planar polarity effectors) complex, composed of INTU, FUZ and WDPCP. Interacts with CPLANE1. Interacts with NPHP4 and DAAM1; INTU is mediating the interaction between NPHP4 and DAAM1. As to expression, widely expressed in E8.5 and E9.5 wild type embryos. Present in various adult organs (at protein level).

Its subcellular location is the cytoplasm. It localises to the cell surface. The protein localises to the cytoskeleton. The protein resides in the cilium basal body. It is found in the microtubule organizing center. Its subcellular location is the centrosome. It localises to the centriole. In terms of biological role, plays a key role in ciliogenesis and embryonic development. Regulator of cilia formation by controlling the organization of the apical actin cytoskeleton and the positioning of the basal bodies at the apical cell surface, which in turn is essential for the normal orientation of elongating ciliary microtubules. Plays a key role in definition of cell polarity via its role in ciliogenesis but not via conversion extension. Has an indirect effect on hedgehog signaling. Proposed to function as core component of the CPLANE (ciliogenesis and planar polarity effectors) complex involved in the recruitment of peripheral IFT-A proteins to basal bodies. Required for recruitment of CPLANE2 to the mother centriole. Binds phosphatidylinositol 3-phosphate with highest affinity, followed by phosphatidylinositol 4-phosphate and phosphatidylinositol 5-phosphate. The chain is Protein inturned (Intu) from Mus musculus (Mouse).